Consider the following 74-residue polypeptide: Exodeoxyribonuclease 7 small subunit (74 aa).

This sequence belongs to the XseB family. Heterooligomer composed of large and small subunits.

It is found in the cytoplasm. It catalyses the reaction Exonucleolytic cleavage in either 5'- to 3'- or 3'- to 5'-direction to yield nucleoside 5'-phosphates.. Functionally, bidirectionally degrades single-stranded DNA into large acid-insoluble oligonucleotides, which are then degraded further into small acid-soluble oligonucleotides. The protein is Exodeoxyribonuclease 7 small subunit of Glaesserella parasuis serovar 5 (strain SH0165) (Haemophilus parasuis).